The primary structure comprises 126 residues: Small ribosomal subunit protein bS6 (126 aa).

The segment at 99 to 126 (PLPAPRVVPGTEAPEPAQAAETPEPEAS) is disordered. Positions 107–120 (PGTEAPEPAQAAET) are enriched in low complexity.

It belongs to the bacterial ribosomal protein bS6 family.

Binds together with bS18 to 16S ribosomal RNA. This is Small ribosomal subunit protein bS6 from Synechococcus sp. (strain CC9902).